The following is a 202-amino-acid chain: GTP cyclohydrolase 1 (202 aa).

The Zn(2+) site is built by Cys90, His93, and Cys163.

This sequence belongs to the GTP cyclohydrolase I family. As to quaternary structure, homomer.

The catalysed reaction is GTP + H2O = 7,8-dihydroneopterin 3'-triphosphate + formate + H(+). It participates in cofactor biosynthesis; 7,8-dihydroneopterin triphosphate biosynthesis; 7,8-dihydroneopterin triphosphate from GTP: step 1/1. In Mycobacterium ulcerans (strain Agy99), this protein is GTP cyclohydrolase 1.